Here is a 231-residue protein sequence, read N- to C-terminus: Lipoprotein-releasing system ATP-binding protein LolD 2 (231 aa).

An ABC transporter domain is found at 6–230; it reads VEARSLSKSF…DGRLVGQDPA (225 aa). Residue 42–49 participates in ATP binding; that stretch reads GPSGSGKS.

Belongs to the ABC transporter superfamily. Lipoprotein translocase (TC 3.A.1.125) family. The complex is composed of two ATP-binding proteins (LolD) and two transmembrane proteins (LolC and LolE).

It localises to the cell inner membrane. In terms of biological role, part of the ABC transporter complex LolCDE involved in the translocation of mature outer membrane-directed lipoproteins, from the inner membrane to the periplasmic chaperone, LolA. Responsible for the formation of the LolA-lipoprotein complex in an ATP-dependent manner. The protein is Lipoprotein-releasing system ATP-binding protein LolD 2 of Rhodospirillum rubrum (strain ATCC 11170 / ATH 1.1.1 / DSM 467 / LMG 4362 / NCIMB 8255 / S1).